A 344-amino-acid polypeptide reads, in one-letter code: Follistatin (344 aa).

An N-terminal signal peptide occupies residues 1–29 (MVCARHQPGGLCLLLLLLCQFMEDRSAQA). Residues 30–103 (GNCWLRQAKN…TCENVDCGPG (74 aa)) enclose the TB domain. 18 disulfide bridges follow: Cys-32–Cys-55, Cys-42–Cys-88, Cys-56–Cys-91, Cys-95–Cys-106, Cys-100–Cys-116, Cys-118–Cys-150, Cys-122–Cys-143, Cys-132–Cys-164, Cys-168–Cys-179, Cys-173–Cys-189, Cys-192–Cys-225, Cys-196–Cys-218, Cys-207–Cys-239, Cys-245–Cys-256, Cys-250–Cys-267, Cys-270–Cys-302, Cys-274–Cys-295, and Cys-284–Cys-316. The region spanning 94-117 (TCENVDCGPGKKCRMNKKNKPRCV) is the Follistatin-like 1 domain. Residues 112–166 (NKPRCVCAPDCSNITWKGPVCGLDGKTYRNECALLKARCKEQPELEVQYQGKCKK) enclose the Kazal-like 1 domain. An N-linked (GlcNAc...) asparagine glycan is attached at Asn-124. The region spanning 167 to 190 (TCRDVFCPGSSTCVVDQTNNAYCV) is the Follistatin-like 2 domain. Residues 186-241 (NAYCVTCNRICPEPSSSEQSLCGNDGVTYSSACHLRKATCLLGRSIGLAYEGKCIK) form the Kazal-like 2 domain. Positions 244–268 (SCEDIQCGGGKKCLWDFKVGRGRCS) constitute a Follistatin-like 3 domain. Residues 264 to 318 (RGRCSLCDELCPDSKSDEPVCASDNATYASECAMKEAACSSGVLLEVKHSGSCNS) form the Kazal-like 3 domain. Residue Asn-288 is glycosylated (N-linked (GlcNAc...) asparagine). The tract at residues 315–344 (SCNSISEETEEEEEEEDQDYSFPISSTLEW) is disordered. Acidic residues predominate over residues 321–333 (EETEEEEEEEDQD).

As to quaternary structure, interacts with GDF11. Interacts with activin A/INHBA. Interacts with myostatin/MSTN.

Its subcellular location is the secreted. It is found in the nucleus. The protein localises to the nucleolus. Multifunctional regulatory protein whose primary function is to antagonize members of the transforming growth factor beta (TGF-beta) superfamily including activin, myostatin, GDF11 or bone morphogenetic proteins (BMPs). Mechanistically, binds to these ligands in the extracellular space, blocking their type II receptor-binding site to inhibit downstream signaling. Plays an essential role in muscle fiber formation and growth both by preventing the repressive effects of myostatin and through SMAD3/AKT/mTOR signaling independently of myostatin. Also promotes neural differentiation by antagonizing the action BMP4. Acts as a specific inhibitor of the biosynthesis and secretion of pituitary follicle stimulating hormone (FSH) by sequestering activin A/INHBA. On the other hand, translocates into the nucleus where it down-regulates rRNA synthesis and ribosome biogenesis to maintain cellular energy homeostasis by binding to rDNA. The sequence is that of Follistatin from Rattus norvegicus (Rat).